We begin with the raw amino-acid sequence, 1700 residues long: Rho guanine nucleotide exchange factor 28 (1700 aa).

Positions 288–335 (TERATMPSGAAETEEEVRNLESGRSPSEEEEDGQLVKSQADGPSEQED) are disordered. Residues Ser312, Ser314, and Ser478 each carry the phosphoserine modification. A disordered region spans residues 483–525 (VADSEEEGRSEPPICYAVGSQSSPRTGLPGGDELDSFDANTEP). Ser623 is modified (phosphoserine). The Phorbol-ester/DAG-type zinc-finger motif lies at 651 to 698 (RHQFVPGTFSGVLQCSGCDKTLLGKESLQCANCKANTHKGCKDTVPPC). Residues 709–720 (NKPQTILGSSSV) are compositionally biased toward polar residues. Disordered stretches follow at residues 709-761 (NKPQ…VPGT) and 774-799 (ESEG…GSSP). A compositionally biased stretch (low complexity) spans 728 to 737 (LSLHPSPSMP). Polar residues predominate over residues 774–783 (ESEGDSNSWR). Positions 848 to 1043 (KRQDVIFELM…KDMIAAVDLK (196 aa)) constitute a DH domain. The 103-residue stretch at 1085-1187 (ALLHDGLVYW…WMRRIQQAVE (103 aa)) folds into the PH domain. The disordered stretch occupies residues 1186–1207 (VESCPEEEGGRTSESDEERRKA). Positions 1193–1207 (EGGRTSESDEERRKA) are enriched in basic and acidic residues. Positions 1294–1303 (DVSQPSEEGP) are interaction with PTK2/FAK1; required for regulation of axonal branching and synapse formation. The mediates cytoplasmic retention and interaction with YWHAH stretch occupies residues 1369–1380 (IIQAIQNLTRLL). The interaction with microtubules stretch occupies residues 1421 to 1700 (QEKSRYLEKH…DGAEENIVYL (280 aa)). Residues 1473 to 1522 (ERECQSQEELLLRHRSELDHQLQEYQQNLERLREGQRMVERERQRMRDQQ) adopt a coiled-coil conformation. The segment at 1493–1524 (QLQEYQQNLERLREGQRMVERERQRMRDQQGL) is RNA-binding. Ser1535 carries the phosphoserine modification. Residues 1563–1576 (FLNDAFTHMSLNTS) form a mediates cytoplasmic retention and interaction with MAPK8IP1 region. The tract at residues 1574-1598 (NTSNKPNPSGAPWDAHPPGGSHLDL) is disordered. Position 1604 is a phosphoserine (Ser1604). A disordered region spans residues 1612–1700 (VSQPSDVNSE…DGAEENIVYL (89 aa)). Over residues 1613-1623 (SQPSDVNSELW) the composition is skewed to polar residues. Positions 1633–1642 (ARQESIKDSC) are enriched in basic and acidic residues. The span at 1647–1672 (DLNSFQTESPDPQDSNQRGPQPQTLI) shows a compositional bias: polar residues.

Homooligomer; forms cytoplasmic aggregates. Forms a complex with MAPK8 and MAPK8IP1. Interacts with RHOA. Interacts with microtubules. Interacts with YWHAE and YWHAH. Interacts with PTK2/FAK1. Interacts with NEFL. Interacts with CTNND2; prevents interaction with RHOA. Post-translationally, phosphorylated on tyrosine upon stimulation of cells by laminin.

Its subcellular location is the cytoplasm. It localises to the cell membrane. In terms of biological role, functions as a RHOA-specific guanine nucleotide exchange factor regulating signaling pathways downstream of integrins and growth factor receptors. Functions in axonal branching, synapse formation and dendritic morphogenesis. Also functions in focal adhesion formation, cell motility and B-lymphocytes activation. May regulate NEFL expression and aggregation and play a role in apoptosis. This Rattus norvegicus (Rat) protein is Rho guanine nucleotide exchange factor 28 (Arhgef28).